The sequence spans 64 residues: Small ribosomal subunit protein eS17 (64 aa).

This sequence belongs to the eukaryotic ribosomal protein eS17 family.

The chain is Small ribosomal subunit protein eS17 from Natronomonas pharaonis (strain ATCC 35678 / DSM 2160 / CIP 103997 / JCM 8858 / NBRC 14720 / NCIMB 2260 / Gabara) (Halobacterium pharaonis).